Consider the following 590-residue polypeptide: Aspartate--tRNA ligase (590 aa).

Glu-174 is an L-aspartate binding site. The aspartate stretch occupies residues 198 to 201 (QLMK). Residue Arg-220 participates in L-aspartate binding. ATP is bound by residues 220–222 (RDE) and Gln-229. His-443 is a binding site for L-aspartate. Residue Glu-484 participates in ATP binding. Arg-491 lines the L-aspartate pocket. Position 536–539 (536–539 (GLDR)) interacts with ATP.

The protein belongs to the class-II aminoacyl-tRNA synthetase family. Type 1 subfamily. As to quaternary structure, homodimer.

It localises to the cytoplasm. The enzyme catalyses tRNA(Asp) + L-aspartate + ATP = L-aspartyl-tRNA(Asp) + AMP + diphosphate. In terms of biological role, catalyzes the attachment of L-aspartate to tRNA(Asp) in a two-step reaction: L-aspartate is first activated by ATP to form Asp-AMP and then transferred to the acceptor end of tRNA(Asp). The protein is Aspartate--tRNA ligase of Lactococcus lactis subsp. cremoris (strain MG1363).